We begin with the raw amino-acid sequence, 293 residues long: Shikimate dehydrogenase (NADP(+)) (293 aa).

Shikimate is bound by residues 20 to 22 (SLT) and Thr-72. Lys-76 acts as the Proton acceptor in catalysis. Shikimate is bound by residues Asn-97 and Asp-112. NADP(+) is bound by residues 136 to 140 (GAGGA) and Ile-230. Residue Tyr-232 participates in shikimate binding. Residue Gly-253 coordinates NADP(+).

Belongs to the shikimate dehydrogenase family. Homodimer.

It carries out the reaction shikimate + NADP(+) = 3-dehydroshikimate + NADPH + H(+). Its pathway is metabolic intermediate biosynthesis; chorismate biosynthesis; chorismate from D-erythrose 4-phosphate and phosphoenolpyruvate: step 4/7. Functionally, involved in the biosynthesis of the chorismate, which leads to the biosynthesis of aromatic amino acids. Catalyzes the reversible NADPH linked reduction of 3-dehydroshikimate (DHSA) to yield shikimate (SA). The polypeptide is Shikimate dehydrogenase (NADP(+)) (Pseudarthrobacter chlorophenolicus (strain ATCC 700700 / DSM 12829 / CIP 107037 / JCM 12360 / KCTC 9906 / NCIMB 13794 / A6) (Arthrobacter chlorophenolicus)).